The primary structure comprises 251 residues: Cell division protein ZapD (251 aa).

It belongs to the ZapD family. Interacts with FtsZ.

The protein resides in the cytoplasm. In terms of biological role, cell division factor that enhances FtsZ-ring assembly. Directly interacts with FtsZ and promotes bundling of FtsZ protofilaments, with a reduction in FtsZ GTPase activity. In Azoarcus sp. (strain BH72), this protein is Cell division protein ZapD.